The sequence spans 229 residues: MAKISKRATAHGGKFDRSVNHPLSDAIKIIKECATAKFDETIEVAVNLGVDPRHADQMVRGSVSLPKGTGKVVRVLVFAKGEKAEEAKAAGADVVGADDLLEKIQGGWLEFDRVVATPDVMGVVGRLGKILGPRNMMPNPKLGTVTFDVAKVVQEIKAGQVAFRVEKSGIIHAGVGKASFPVEDLVENITALVEQLRRMKPAAAKGTYMKKVSISSTMGPGIKVDQSSI.

The protein belongs to the universal ribosomal protein uL1 family. In terms of assembly, part of the 50S ribosomal subunit.

In terms of biological role, binds directly to 23S rRNA. The L1 stalk is quite mobile in the ribosome, and is involved in E site tRNA release. Functionally, protein L1 is also a translational repressor protein, it controls the translation of the L11 operon by binding to its mRNA. The polypeptide is Large ribosomal subunit protein uL1 (Magnetococcus marinus (strain ATCC BAA-1437 / JCM 17883 / MC-1)).